The sequence spans 526 residues: Glucose-6-phosphate isomerase (526 aa).

The active-site Proton donor is the glutamate 320. Residues histidine 349 and lysine 453 contribute to the active site.

This sequence belongs to the GPI family.

It localises to the cytoplasm. The catalysed reaction is alpha-D-glucose 6-phosphate = beta-D-fructose 6-phosphate. It participates in carbohydrate biosynthesis; gluconeogenesis. It functions in the pathway carbohydrate degradation; glycolysis; D-glyceraldehyde 3-phosphate and glycerone phosphate from D-glucose: step 2/4. Catalyzes the reversible isomerization of glucose-6-phosphate to fructose-6-phosphate. The protein is Glucose-6-phosphate isomerase of Rippkaea orientalis (strain PCC 8801 / RF-1) (Cyanothece sp. (strain PCC 8801)).